Consider the following 376-residue polypeptide: Meiotically up-regulated gene 183 protein (376 aa).

Positions 334–376 (SLENVDDMDDIDVKEPLFSDNDEDVENSDSEDGSESIGSEDEE) are disordered. The segment covering 353-376 (DNDEDVENSDSEDGSESIGSEDEE) has biased composition (acidic residues).

The protein belongs to the RTT106 family.

Its function is as follows. Has a role in meiosis. The chain is Meiotically up-regulated gene 183 protein (mug183) from Schizosaccharomyces pombe (strain 972 / ATCC 24843) (Fission yeast).